The chain runs to 477 residues: Glutamate--tRNA ligase (477 aa).

The 'HIGH' region signature appears at proline 8–threonine 18. The 'KMSKS' region signature appears at lysine 247–arginine 251. Lysine 250 is a binding site for ATP.

The protein belongs to the class-I aminoacyl-tRNA synthetase family. Glutamate--tRNA ligase type 1 subfamily. Monomer.

It localises to the cytoplasm. The catalysed reaction is tRNA(Glu) + L-glutamate + ATP = L-glutamyl-tRNA(Glu) + AMP + diphosphate. Catalyzes the attachment of glutamate to tRNA(Glu) in a two-step reaction: glutamate is first activated by ATP to form Glu-AMP and then transferred to the acceptor end of tRNA(Glu). This Synechococcus sp. (strain CC9605) protein is Glutamate--tRNA ligase.